The chain runs to 142 residues: Hemoglobin subunit alpha-A (142 aa).

The Globin domain occupies 2–142; that stretch reads VLSAADKNNV…VGTVLTAKYR (141 aa). Residue H59 coordinates O2. Position 88 (H88) interacts with heme b.

Belongs to the globin family. As to quaternary structure, heterotetramer of two alpha chains and two beta chains. In terms of tissue distribution, red blood cells.

Its function is as follows. Involved in oxygen transport from the lung to the various peripheral tissues. This Gallus gallus (Chicken) protein is Hemoglobin subunit alpha-A (HBAA).